A 711-amino-acid chain; its full sequence is 1,4-alpha-glucan-branching enzyme (711 aa).

Residues tryptophan 98 and lysine 135 each coordinate (1,4-alpha-D-glucosyl)n. Aspartate 353 functions as the Nucleophile in the catalytic mechanism. The active-site Proton donor is the glutamate 414.

The protein belongs to the glycosyl hydrolase 13 family. GlgB subfamily.

The protein resides in the cytoplasm. The enzyme catalyses Transfers a segment of a (1-&gt;4)-alpha-D-glucan chain to a primary hydroxy group in a similar glucan chain.. It participates in glycan biosynthesis; glycogen biosynthesis. In terms of biological role, glycogen-branching enzyme participates in the glycogen biosynthetic process along with glycogenin and glycogen synthase. Generates alpha-1,6-glucosidic branches from alpha-1,4-linked glucose chains, to increase solubility of the glycogen polymer. This chain is 1,4-alpha-glucan-branching enzyme (GLC3), found in Debaryomyces hansenii (strain ATCC 36239 / CBS 767 / BCRC 21394 / JCM 1990 / NBRC 0083 / IGC 2968) (Yeast).